Reading from the N-terminus, the 196-residue chain is uncharacterized protein (196 aa).

One can recognise a Bro-N domain in the interval 58-163 (HKFFDAIKDS…IILPNNYHKN (106 aa)).

This is an uncharacterized protein from Acanthamoeba polyphaga mimivirus (APMV).